The chain runs to 447 residues: Cysteine--tRNA ligase (447 aa).

Residue Cys28 participates in Zn(2+) binding. A 'HIGH' region motif is present at residues 30–40 (PTVYNYIHIGN). 3 residues coordinate Zn(2+): Cys211, His236, and Glu240. A 'KMSKS' region motif is present at residues 268 to 272 (KMSKS). Lys271 serves as a coordination point for ATP.

Belongs to the class-I aminoacyl-tRNA synthetase family. Monomer. The cofactor is Zn(2+).

It localises to the cytoplasm. The enzyme catalyses tRNA(Cys) + L-cysteine + ATP = L-cysteinyl-tRNA(Cys) + AMP + diphosphate. The sequence is that of Cysteine--tRNA ligase from Streptococcus pyogenes serotype M18 (strain MGAS8232).